The sequence spans 844 residues: DNA mismatch repair protein MutS (844 aa).

Residue 602 to 609 (GPNMSGKS) participates in ATP binding.

It belongs to the DNA mismatch repair MutS family.

In terms of biological role, this protein is involved in the repair of mismatches in DNA. It is possible that it carries out the mismatch recognition step. This protein has a weak ATPase activity. The polypeptide is DNA mismatch repair protein MutS (Streptococcus pneumoniae (strain Hungary19A-6)).